The primary structure comprises 358 residues: Fructose-bisphosphate aldolase (358 aa).

D-glyceraldehyde 3-phosphate is bound at residue serine 61. The Proton donor role is filled by aspartate 108. Histidine 109, aspartate 143, glutamate 173, and histidine 225 together coordinate Zn(2+). Glycine 226 serves as a coordination point for dihydroxyacetone phosphate. Histidine 264 is a binding site for Zn(2+). Dihydroxyacetone phosphate-binding positions include 265-267 (GGS) and 286-289 (NIDT). Phosphothreonine is present on residues threonine 289, threonine 312, threonine 340, and threonine 342.

The protein belongs to the class II fructose-bisphosphate aldolase family. Homodimer. It depends on Zn(2+) as a cofactor.

It catalyses the reaction beta-D-fructose 1,6-bisphosphate = D-glyceraldehyde 3-phosphate + dihydroxyacetone phosphate. It participates in carbohydrate degradation; glycolysis; D-glyceraldehyde 3-phosphate and glycerone phosphate from D-glucose: step 4/4. Catalyzes the aldol condensation of dihydroxyacetone phosphate (DHAP or glycerone-phosphate) with glyceraldehyde 3-phosphate (G3P) to form fructose 1,6-bisphosphate (FBP) in gluconeogenesis and the reverse reaction in glycolysis. The sequence is that of Fructose-bisphosphate aldolase (fba1) from Schizosaccharomyces pombe (strain 972 / ATCC 24843) (Fission yeast).